Consider the following 289-residue polypeptide: ATP synthase gamma chain (289 aa).

This sequence belongs to the ATPase gamma chain family. As to quaternary structure, F-type ATPases have 2 components, CF(1) - the catalytic core - and CF(0) - the membrane proton channel. CF(1) has five subunits: alpha(3), beta(3), gamma(1), delta(1), epsilon(1). CF(0) has three main subunits: a, b and c.

The protein localises to the cell membrane. Its function is as follows. Produces ATP from ADP in the presence of a proton gradient across the membrane. The gamma chain is believed to be important in regulating ATPase activity and the flow of protons through the CF(0) complex. The sequence is that of ATP synthase gamma chain from Lactococcus lactis subsp. cremoris (strain MG1363).